A 308-amino-acid polypeptide reads, in one-letter code: Methionyl-tRNA formyltransferase (308 aa).

Residue 109–112 participates in (6S)-5,6,7,8-tetrahydrofolate binding; the sequence is SLLP.

This sequence belongs to the Fmt family.

The enzyme catalyses L-methionyl-tRNA(fMet) + (6R)-10-formyltetrahydrofolate = N-formyl-L-methionyl-tRNA(fMet) + (6S)-5,6,7,8-tetrahydrofolate + H(+). Attaches a formyl group to the free amino group of methionyl-tRNA(fMet). The formyl group appears to play a dual role in the initiator identity of N-formylmethionyl-tRNA by promoting its recognition by IF2 and preventing the misappropriation of this tRNA by the elongation apparatus. The protein is Methionyl-tRNA formyltransferase of Salinispora arenicola (strain CNS-205).